We begin with the raw amino-acid sequence, 290 residues long: Ribosomal RNA small subunit methyltransferase A (290 aa).

Positions 27, 29, 54, 75, 100, and 125 each coordinate S-adenosyl-L-methionine.

It belongs to the class I-like SAM-binding methyltransferase superfamily. rRNA adenine N(6)-methyltransferase family. RsmA subfamily.

Its subcellular location is the cytoplasm. It carries out the reaction adenosine(1518)/adenosine(1519) in 16S rRNA + 4 S-adenosyl-L-methionine = N(6)-dimethyladenosine(1518)/N(6)-dimethyladenosine(1519) in 16S rRNA + 4 S-adenosyl-L-homocysteine + 4 H(+). Specifically dimethylates two adjacent adenosines (A1518 and A1519) in the loop of a conserved hairpin near the 3'-end of 16S rRNA in the 30S particle. May play a critical role in biogenesis of 30S subunits. The polypeptide is Ribosomal RNA small subunit methyltransferase A (Streptococcus pneumoniae (strain ATCC BAA-255 / R6)).